Here is a 104-residue protein sequence, read N- to C-terminus: L-rhamnose mutarotase (104 aa).

Residue tyrosine 18 participates in substrate binding. Histidine 22 acts as the Proton donor in catalysis. Substrate-binding positions include tyrosine 41 and 76–77 (WW).

This sequence belongs to the rhamnose mutarotase family. As to quaternary structure, homodimer.

The protein localises to the cytoplasm. It carries out the reaction alpha-L-rhamnose = beta-L-rhamnose. The protein operates within carbohydrate metabolism; L-rhamnose metabolism. Its function is as follows. Involved in the anomeric conversion of L-rhamnose. In Citrobacter koseri (strain ATCC BAA-895 / CDC 4225-83 / SGSC4696), this protein is L-rhamnose mutarotase.